The primary structure comprises 814 residues: Valine--tRNA ligase (814 aa).

A 'HIGH' region motif is present at residues 46–56 (PTVSGQLHIGH). Positions 536–540 (KMSKS) match the 'KMSKS' region motif. Lys539 is an ATP binding site.

Belongs to the class-I aminoacyl-tRNA synthetase family. ValS type 2 subfamily. As to quaternary structure, monomer.

Its subcellular location is the cytoplasm. The enzyme catalyses tRNA(Val) + L-valine + ATP = L-valyl-tRNA(Val) + AMP + diphosphate. Functionally, catalyzes the attachment of valine to tRNA(Val). As ValRS can inadvertently accommodate and process structurally similar amino acids such as threonine, to avoid such errors, it has a 'posttransfer' editing activity that hydrolyzes mischarged Thr-tRNA(Val) in a tRNA-dependent manner. This Rickettsia prowazekii (strain Madrid E) protein is Valine--tRNA ligase.